Here is a 141-residue protein sequence, read N- to C-terminus: Putative pre-16S rRNA nuclease (141 aa).

It belongs to the YqgF nuclease family.

The protein resides in the cytoplasm. In terms of biological role, could be a nuclease involved in processing of the 5'-end of pre-16S rRNA. This chain is Putative pre-16S rRNA nuclease, found in Syntrophomonas wolfei subsp. wolfei (strain DSM 2245B / Goettingen).